Here is a 302-residue protein sequence, read N- to C-terminus: Negative regulator of the PHO system (302 aa).

Positions 6 to 296 (FKQLEKLGNG…AKQALLHPWF (291 aa)) constitute a Protein kinase domain. ATP contacts are provided by residues 12 to 20 (LGNGTYATV) and Lys35. Asp132 serves as the catalytic Proton acceptor.

Belongs to the protein kinase superfamily. CMGC Ser/Thr protein kinase family. CDC2/CDKX subfamily. In terms of assembly, interacts with a number of cyclins.

The catalysed reaction is L-seryl-[protein] + ATP = O-phospho-L-seryl-[protein] + ADP + H(+). It carries out the reaction L-threonyl-[protein] + ATP = O-phospho-L-threonyl-[protein] + ADP + H(+). In terms of biological role, when phosphate concentrations are high it phosphorylates the PHO4 transcription factor thus establishing repression. This is Negative regulator of the PHO system (PHO85) from Candida glabrata (strain ATCC 2001 / BCRC 20586 / JCM 3761 / NBRC 0622 / NRRL Y-65 / CBS 138) (Yeast).